Reading from the N-terminus, the 286-residue chain is Shikimate dehydrogenase (NADP(+)) (286 aa).

Residues S20 to S22 and T67 each bind shikimate. K71 (proton acceptor) is an active-site residue. 2 residues coordinate shikimate: N92 and D107. NADP(+)-binding positions include G132–A136 and M228. Y230 is a binding site for shikimate. G251 lines the NADP(+) pocket.

This sequence belongs to the shikimate dehydrogenase family. As to quaternary structure, homodimer.

It carries out the reaction shikimate + NADP(+) = 3-dehydroshikimate + NADPH + H(+). It functions in the pathway metabolic intermediate biosynthesis; chorismate biosynthesis; chorismate from D-erythrose 4-phosphate and phosphoenolpyruvate: step 4/7. Its function is as follows. Involved in the biosynthesis of the chorismate, which leads to the biosynthesis of aromatic amino acids. Catalyzes the reversible NADPH linked reduction of 3-dehydroshikimate (DHSA) to yield shikimate (SA). This chain is Shikimate dehydrogenase (NADP(+)), found in Geobacter metallireducens (strain ATCC 53774 / DSM 7210 / GS-15).